The primary structure comprises 485 residues: Glucagon receptor (485 aa).

A signal peptide spans 1 to 26 (MLLTQLHCPYLLLLLVVLSCLPKAPS). Residues 27–137 (AQVMDFLFEK…EIEVQKGVAK (111 aa)) are Extracellular-facing. Cystine bridges form between Cys-44–Cys-68, Cys-59–Cys-101, and Cys-82–Cys-122. N-linked (GlcNAc...) asparagine glycans are attached at residues Asn-47, Asn-60, Asn-75, and Asn-79. A helical membrane pass occupies residues 138-162 (MYSSYQVMYTVGYSLSLGALLLALV). At 163 to 174 (ILLGLRKLHCTR) the chain is on the cytoplasmic side. The chain crosses the membrane as a helical span at residues 175 to 199 (NYIHGNLFASFVLKAGSVLVIDWLL). The Extracellular portion of the chain corresponds to 200–226 (KTRYSQKIGDDLSVSVWLSDGAVAGCR). Cys-225 and Cys-295 are joined by a disulfide. The chain crosses the membrane as a helical span at residues 227-250 (VATVIMQYGIIANYCWLLVEGVYL). Residues 251–264 (YSLLSITTFSEKSF) are Cytoplasmic-facing. The helical transmembrane segment at 265–286 (FSLYLCIGWGSPLLFVIPWVVV) threads the bilayer. Residues 287 to 304 (KCLFENVQCWTSNDNMGF) lie on the Extracellular side of the membrane. Residues 305–327 (WWILRIPVLLAILINFFIFVRII) form a helical membrane-spanning segment. Residues 328 to 351 (HLLVAKLRAHQMHYADYKFRLARS) are Cytoplasmic-facing. The segment at 351-354 (STLT) is important for allosteric inhibitor binding. A helical membrane pass occupies residues 352 to 370 (TLTLIPLLGVHEVVFAFVT). Topologically, residues 371 to 382 (DEHAQGTLRSTK) are extracellular. Residues 383 to 403 (LFFDLFFSSFQGLLVAVLYCF) form a helical membrane-spanning segment. Residues 404–485 (LNKEVQAELL…SLPRLADSPT (82 aa)) lie on the Cytoplasmic side of the membrane. The tract at residues 455–485 (MSAGSSSGTGCEPSAKTSLASSLPRLADSPT) is disordered. Over residues 456-475 (SAGSSSGTGCEPSAKTSLAS) the composition is skewed to polar residues. A phosphoserine mark is found at Ser-460 and Ser-476.

This sequence belongs to the G-protein coupled receptor 2 family. Ligand-binding promotes phosphorylation of serine residues in the C-terminal cytoplasmic domain. Phosphorylation is important for receptor endocytosis after ligand-binding.

It localises to the cell membrane. G-protein coupled receptor for glucagon that plays a central role in the regulation of blood glucose levels and glucose homeostasis. Regulates the rate of hepatic glucose production by promoting glycogen hydrolysis and gluconeogenesis. Plays an important role in mediating the responses to fasting. Ligand binding causes a conformation change that triggers signaling via guanine nucleotide-binding proteins (G proteins) and modulates the activity of down-stream effectors, such as adenylate cyclase. Promotes activation of adenylate cyclase. Besides, plays a role in signaling via a phosphatidylinositol-calcium second messenger system. The sequence is that of Glucagon receptor (Gcgr) from Rattus norvegicus (Rat).